We begin with the raw amino-acid sequence, 109 residues long: MKVLALPVAVAAMLLVLAQNTQSVYIQYEGFQVKLDSVKKLDELLEQPRSFRHRMGTQRDPSVLCSDPALPSDLQPVCENSQAANIFRALRSISQEDCELCINVACTGC.

A signal peptide spans 1 to 23 (MKVLALPVAVAAMLLVLAQNTQS). The propeptide occupies 24–94 (VYIQYEGFQV…NIFRALRSIS (71 aa)). 3 disulfides stabilise this stretch: C65-C78, C98-C106, and C101-C109.

This sequence belongs to the guanylin family. As to expression, small and large intestine and atria and ventricles of heart. Both uroguanylin and prouroguanylin are found in plasma.

It localises to the secreted. Its function is as follows. Endogenous activator of intestinal guanylate cyclase. It stimulates this enzyme through the same receptor binding region as the heat-stable enterotoxins. May be a potent physiological regulator of intestinal fluid and electrolyte transport. May be an autocrine/paracrine regulator of intestinal salt and water transport. In Didelphis virginiana (North American opossum), this protein is Guanylate cyclase activator 2B (GUCA2B).